Here is a 177-residue protein sequence, read N- to C-terminus: Large ribosomal subunit protein uL6 (177 aa).

Belongs to the universal ribosomal protein uL6 family. In terms of assembly, part of the 50S ribosomal subunit.

Its function is as follows. This protein binds to the 23S rRNA, and is important in its secondary structure. It is located near the subunit interface in the base of the L7/L12 stalk, and near the tRNA binding site of the peptidyltransferase center. In Azorhizobium caulinodans (strain ATCC 43989 / DSM 5975 / JCM 20966 / LMG 6465 / NBRC 14845 / NCIMB 13405 / ORS 571), this protein is Large ribosomal subunit protein uL6.